The chain runs to 186 residues: Ribosome-recycling factor (186 aa).

It belongs to the RRF family.

The protein localises to the cytoplasm. Responsible for the release of ribosomes from messenger RNA at the termination of protein biosynthesis. May increase the efficiency of translation by recycling ribosomes from one round of translation to another. This Coprothermobacter proteolyticus (strain ATCC 35245 / DSM 5265 / OCM 4 / BT) protein is Ribosome-recycling factor.